A 583-amino-acid polypeptide reads, in one-letter code: ATP-dependent lipid A-core flippase (583 aa).

5 helical membrane passes run 27-47, 69-89, 142-162, 165-185, and 249-269; these read LAVA…MVSL, LLVF…TYCL, ALVS…LMFY, WQLS…IGFV, and AAAN…VLYL. An ABC transmembrane type-1 domain is found at 28-310; sequence AVAVVALIIN…LTNVTSQFQR (283 aa). The ABC transporter domain occupies 342–578; the sequence is VNVKDISFTY…DGAYAQLHRI (237 aa). 376–383 contacts ATP; the sequence is GRSGSGKS.

The protein belongs to the ABC transporter superfamily. Lipid exporter (TC 3.A.1.106) family. In terms of assembly, homodimer.

It is found in the cell inner membrane. The catalysed reaction is ATP + H2O + lipid A-core oligosaccharideSide 1 = ADP + phosphate + lipid A-core oligosaccharideSide 2.. Functionally, involved in lipopolysaccharide (LPS) biosynthesis. Translocates lipid A-core from the inner to the outer leaflet of the inner membrane. Transmembrane domains (TMD) form a pore in the inner membrane and the ATP-binding domain (NBD) is responsible for energy generation. The polypeptide is ATP-dependent lipid A-core flippase (Vibrio vulnificus (strain CMCP6)).